A 90-amino-acid polypeptide reads, in one-letter code: Small ribosomal subunit protein uS15c (90 aa).

This sequence belongs to the universal ribosomal protein uS15 family. Part of the 30S ribosomal subunit.

Its subcellular location is the plastid. It is found in the chloroplast. The protein is Small ribosomal subunit protein uS15c (rps15) of Liriodendron tulipifera (Tuliptree).